The sequence spans 557 residues: Urocanate hydratase (557 aa).

Residues 53–54, Gln-131, 177–179, Glu-197, Arg-202, 243–244, 264–268, 274–275, and Tyr-323 contribute to the NAD(+) site; these read GG, GMG, NA, QTSAH, and YL. The active site involves Cys-411. Gly-493 is an NAD(+) binding site.

This sequence belongs to the urocanase family. Requires NAD(+) as cofactor.

The protein resides in the cytoplasm. The enzyme catalyses 4-imidazolone-5-propanoate = trans-urocanate + H2O. It participates in amino-acid degradation; L-histidine degradation into L-glutamate; N-formimidoyl-L-glutamate from L-histidine: step 2/3. Catalyzes the conversion of urocanate to 4-imidazolone-5-propionate. This chain is Urocanate hydratase, found in Pseudomonas putida (strain ATCC 700007 / DSM 6899 / JCM 31910 / BCRC 17059 / LMG 24140 / F1).